The following is a 540-amino-acid chain: Putative F-box/LRR-repeat protein At5g41840 (540 aa).

In terms of domain architecture, F-box spans 13–61 (GDRISGLPDALICHILSFLPTKEAASTTVLAKRWKPLLAFVPNLNFDDS). 7 LRR repeats span residues 80–105 (FMSF…HVKC), 137–165 (RNYC…KIQF), 189–214 (YFKI…VLAN), 217–242 (WADS…NFCR), 254–282 (YEDY…EYSD), 329–360 (ILYL…TIKT), and 361–386 (TPYV…VFEG).

The chain is Putative F-box/LRR-repeat protein At5g41840 from Arabidopsis thaliana (Mouse-ear cress).